Consider the following 418-residue polypeptide: FAD-dependent monooxygenase fmqB (418 aa).

Residues V12 and R68 each coordinate FAD. R147 is a catalytic residue. Positions 272 and 285 each coordinate FAD.

The protein belongs to the paxM FAD-dependent monooxygenase family.

It localises to the cytoplasm. Its pathway is alkaloid biosynthesis. Functionally, FAD-dependent monooxygenase; part of the gene cluster that mediates the biosynthesis of the antitumor fumiquinazolines that confer a dual-usage capability to defend against phagocytes in the environment and animal hosts. The simplest member is fumiquinazoline F (FQF) with a 6-6-6 tricyclic core derived from anthranilic acid (Ant), tryptophan (Trp), and alanine (Ala). The trimodular NRPS fmqA is responsible for FQF formation. Modules 1, 2 and 3 of fmqA are predicted to activate and load Ant, Trp and Ala, respectively, providing for the assembly of an Ant-Trp-Ala-S-enzyme intermediate that would undergo double cyclization for chain release and generation of the tricyclic 6-6-6 product fumiquinazoline F. The presence of an E domain predicted for module 2 of fmqA is consistent with epimerization of L-Trp to D-Trp during assembly to generate the R-stereocenter at C14 of FQF. The FAD-dependent monooxygenase fmqB and the monomodular NRPS fmqC then maturate FQF to FQA. FmqB oxidizes the 2',3'-double bond of the indole side chain of FQF, and fmqC activates L-Ala as the adenylate, installs it as the pantetheinyl thioester on its carrier protein domain, and acylates the oxidized indole for subsequent intramolecular cyclization to create the 6-5-5-imidazolindolone of FQA. The FAD-linked oxidoreductase fmqD introduces a third layer of scaffold complexity by converting FQA to the spirohemiaminal FQC, presumably by catalyzing the formation of a transient imine within the pyrazinone ring. FQC subsequently converts nonenzymatically to the known cyclic aminal FQD. This chain is FAD-dependent monooxygenase fmqB, found in Aspergillus fumigatus (strain ATCC MYA-4609 / CBS 101355 / FGSC A1100 / Af293) (Neosartorya fumigata).